Consider the following 282-residue polypeptide: Putative phosphatase MPN_383 (282 aa).

The active-site Nucleophile is Asp-11. Residue Asp-11 participates in Mg(2+) binding. Leu-12 contacts phosphate. Mg(2+) is bound at residue Asp-13. Phosphate-binding positions include 45–46 (TG) and Lys-207. Asp-230 is a binding site for Mg(2+). Position 233 (Asn-233) interacts with phosphate.

It belongs to the HAD-like hydrolase superfamily. Cof family. Mg(2+) serves as cofactor.

This Mycoplasma pneumoniae (strain ATCC 29342 / M129 / Subtype 1) (Mycoplasmoides pneumoniae) protein is Putative phosphatase MPN_383.